The primary structure comprises 472 residues: uncharacterized protein (472 aa).

The protein belongs to the AllG family.

This is an uncharacterized protein from Escherichia coli (strain K12).